A 161-amino-acid chain; its full sequence is Urease accessory protein UreE (161 aa).

Residues R138–G161 are disordered.

It belongs to the UreE family.

The protein resides in the cytoplasm. Functionally, involved in urease metallocenter assembly. Binds nickel. Probably functions as a nickel donor during metallocenter assembly. The sequence is that of Urease accessory protein UreE from Agrobacterium fabrum (strain C58 / ATCC 33970) (Agrobacterium tumefaciens (strain C58)).